Reading from the N-terminus, the 392-residue chain is Fasciculation and elongation protein zeta-1 (392 aa).

The segment at 1–37 (MEAPLVSLDEEFEDLRPSCSEDPEEKPQCFYGSSPHH) is disordered. S58 bears the Phosphoserine mark. Residues 175–198 (MQNSPDPEEEEEVLEEEDGGETSS) are disordered. Over residues 180–194 (DPEEEEEVLEEEDGG) the composition is skewed to acidic residues. The stretch at 230 to 298 (SELTELLDQV…KKRRKEKGLS (69 aa)) forms a coiled coil. A phosphoserine mark is found at S298 and S316.

Belongs to the zygin family. In terms of assembly, homodimer; disulfide-linked. May form heterodimers with FEZ2. Interacts with the NH2-terminal variable region (V1) of PKC zeta and weakly with that of PKC epsilon. Interacts with UBE4B. Interacts with SAP30L. Interacts with SCOC and ULK1; SCOC interferes with ULK1-binding to FEZ1. Directly interacts with SCOC and UVRAG. Stabilizes the interaction between SCOC and UVRAG during amino acid starvation. Post-translationally, phosphorylated by protein kinase C zeta; which enhances interaction with UBE4B and polyubiquitination. Polyubiquitinated in a UBE4B-dependent manner; which does not lead to proteasomal degradation and may be important for neurogenic activity. Polyubiquitin linkage seems to be mainly through Lys-26. Mainly expressed in brain.

The protein localises to the cytoplasm. Its subcellular location is the cytoskeleton. It is found in the microtubule organizing center. The protein resides in the centrosome. It localises to the cell membrane. May be involved in axonal outgrowth as component of the network of molecules that regulate cellular morphology and axon guidance machinery. Able to restore partial locomotion and axonal fasciculation to C.elegans unc-76 mutants in germline transformation experiments. May participate in the transport of mitochondria and other cargos along microtubules. The chain is Fasciculation and elongation protein zeta-1 (FEZ1) from Homo sapiens (Human).